We begin with the raw amino-acid sequence, 901 residues long: HTH-type transcriptional regulator MalT (901 aa).

Position 39 to 46 (39 to 46) interacts with ATP; it reads SPAGYGKT. An HTH luxR-type domain is found at 829-894; it reads ELIRTSPLTQ…DAVQHAQQLL (66 aa). The H-T-H motif DNA-binding region spans 853–872; the sequence is NEQIAGELDVAATTIKTHIR.

Belongs to the MalT family. In terms of assembly, monomer in solution. Oligomerizes to an active state in the presence of the positive effectors ATP and maltotriose.

With respect to regulation, activated by ATP and maltotriose, which are both required for DNA binding. Its function is as follows. Positively regulates the transcription of the maltose regulon whose gene products are responsible for uptake and catabolism of malto-oligosaccharides. Specifically binds to the promoter region of its target genes, recognizing a short DNA motif called the MalT box. The chain is HTH-type transcriptional regulator MalT from Klebsiella pneumoniae (strain 342).